Reading from the N-terminus, the 547-residue chain is DNA polymerase kappa (547 aa).

The interval 18–39 is disordered; sequence LTIEDDGSSSSDEEATLKRRLA. Positions 20–31 are enriched in acidic residues; that stretch reads IEDDGSSSSDEE. A UmuC domain is found at 132-316; the sequence is IVHVDCDAFY…LPVREVSGIG (185 aa). Mg(2+) contacts are provided by Asp136 and Asp226. The UBZ4-type zinc-finger motif lies at 489–518; it reads TVPCPVCQKNIENELGILNQHVDLCLNVET. Cys492, Cys495, His509, and Cys513 together coordinate Zn(2+).

As to quaternary structure, interacts with hus1 and rad17.

It is found in the cytoplasm. It localises to the nucleus. It carries out the reaction DNA(n) + a 2'-deoxyribonucleoside 5'-triphosphate = DNA(n+1) + diphosphate. Its function is as follows. DNA polymerase specifically involved in DNA repair. Plays an important role in translesion synthesis, where the normal high-fidelity DNA polymerases cannot proceed and DNA synthesis stalls. Has a role in meiosis. This chain is DNA polymerase kappa (mug40), found in Schizosaccharomyces pombe (strain 972 / ATCC 24843) (Fission yeast).